A 370-amino-acid chain; its full sequence is 3-isopropylmalate dehydrogenase 1 (370 aa).

Substrate contacts are provided by R98, R108, R136, and D227. Mg(2+) contacts are provided by D227, D251, and D255. 289 to 301 (GSAPDIAGQGIAN) is an NAD(+) binding site.

This sequence belongs to the isocitrate and isopropylmalate dehydrogenases family. LeuB type 1 subfamily. In terms of assembly, homodimer. Mg(2+) serves as cofactor. Requires Mn(2+) as cofactor.

It is found in the cytoplasm. It carries out the reaction (2R,3S)-3-isopropylmalate + NAD(+) = 4-methyl-2-oxopentanoate + CO2 + NADH. It functions in the pathway amino-acid biosynthesis; L-leucine biosynthesis; L-leucine from 3-methyl-2-oxobutanoate: step 3/4. Catalyzes the oxidation of 3-carboxy-2-hydroxy-4-methylpentanoate (3-isopropylmalate) to 3-carboxy-4-methyl-2-oxopentanoate. The product decarboxylates to 4-methyl-2 oxopentanoate. This Bordetella bronchiseptica (strain ATCC BAA-588 / NCTC 13252 / RB50) (Alcaligenes bronchisepticus) protein is 3-isopropylmalate dehydrogenase 1.